The following is a 166-amino-acid chain: Small ribosomal subunit protein uS5 (166 aa).

One can recognise an S5 DRBM domain in the interval 12–75 (YIEKLVQVNR…EAARRNMIQV (64 aa)).

It belongs to the universal ribosomal protein uS5 family. Part of the 30S ribosomal subunit. Contacts proteins S4 and S8.

Its function is as follows. With S4 and S12 plays an important role in translational accuracy. Located at the back of the 30S subunit body where it stabilizes the conformation of the head with respect to the body. This Pseudomonas entomophila (strain L48) protein is Small ribosomal subunit protein uS5.